The primary structure comprises 196 residues: MKVAIFGGTFNPIHIGHLIMAQYVKNFSEVDRVIFVPNGVPPHKNVDIALPEDRFEMVKLSIEDNPDFEISDFEIKNKEPSWTINTLNYFATSYEKVYFILGSDNLFEIIKWYRAEEILKKFPIIVLPRERNTTLIRRQIEELGIQFSAKMVLIDMPIIDISSTEIRRLIRENKSIRYMVHPKVEEYIIRKGLYKE.

It belongs to the NadD family.

It carries out the reaction nicotinate beta-D-ribonucleotide + ATP + H(+) = deamido-NAD(+) + diphosphate. It functions in the pathway cofactor biosynthesis; NAD(+) biosynthesis; deamido-NAD(+) from nicotinate D-ribonucleotide: step 1/1. Its function is as follows. Catalyzes the reversible adenylation of nicotinate mononucleotide (NaMN) to nicotinic acid adenine dinucleotide (NaAD). The protein is Probable nicotinate-nucleotide adenylyltransferase of Caldicellulosiruptor saccharolyticus (strain ATCC 43494 / DSM 8903 / Tp8T 6331).